Reading from the N-terminus, the 267-residue chain is Glucosamine-6-phosphate deaminase (267 aa).

The active-site Proton acceptor; for enolization step is D71. The active-site For ring-opening step is D140. H142 acts as the Proton acceptor; for ring-opening step in catalysis. The active-site For ring-opening step is the E147.

Belongs to the glucosamine/galactosamine-6-phosphate isomerase family. In terms of assembly, homohexamer.

The protein localises to the cytoplasm. The catalysed reaction is alpha-D-glucosamine 6-phosphate + H2O = beta-D-fructose 6-phosphate + NH4(+). It functions in the pathway nucleotide-sugar biosynthesis; UDP-N-acetyl-alpha-D-glucosamine biosynthesis; alpha-D-glucosamine 6-phosphate from D-fructose 6-phosphate: step 1/1. Functionally, catalyzes the reversible conversion of alpha-D-glucosamine 6-phosphate (GlcN-6P) into beta-D-fructose 6-phosphate (Fru-6P) and ammonium ion, a regulatory reaction step in de novo uridine diphosphate-N-acetyl-alpha-D-glucosamine (UDP-GlcNAc) biosynthesis via hexosamine pathway. The polypeptide is Glucosamine-6-phosphate deaminase (Caenorhabditis elegans).